Here is a 360-residue protein sequence, read N- to C-terminus: Nucleoporin SEH1 (360 aa).

WD repeat units follow at residues 10-49, 55-96, 111-152, 160-210, 217-258, and 276-315; these read DHKD…EWHC, THSG…SNDK, DSRT…NLSQ, SCKL…RKYA, TVTD…KELT, and NHNS…NWKC. K12 is covalently cross-linked (Glycyl lysine isopeptide (Lys-Gly) (interchain with G-Cter in SUMO2)). A Phosphoserine modification is found at S190. Residues 324 to 342 show a composition bias toward low complexity; the sequence is SPVNGSSQQGNSNPSVGSN. Residues 324 to 360 form a disordered region; it reads SPVNGSSQQGNSNPSVGSNIPSLQNSLNGSSAGRKHS. Polar residues predominate over residues 343-354; the sequence is IPSLQNSLNGSS.

Belongs to the WD repeat SEC13 family. In terms of assembly, component of the Nup107-160 subcomplex of the nuclear pore complex (NPC). The Nup107-160 subcomplex includes NUP160, NUP133, NUP107, NUP98, NUP85, NUP43, NUP37, SEH1 and SEC13. The SEH1 subunit appears to be only weakly associated with the Nup107-160 subcomplex. Component of the GATOR2 subcomplex, composed of MIOS, SEC13, SEH1L, WDR24 and WDR59. The GATOR2 complex interacts with CASTOR1 and CASTOR2; the interaction is negatively regulated by arginine. The GATOR2 complex interacts with SESN1, SESN2 and SESN3; the interaction is negatively regulated by amino acids. SESN1, SESN2 and SESN3 convey leucine availability via direct interaction with SEH1L and WDR24.

The protein resides in the chromosome. It localises to the centromere. It is found in the kinetochore. The protein localises to the nucleus. Its subcellular location is the nuclear pore complex. The protein resides in the lysosome membrane. The GATOR2 complex is negatively regulated by the upstream amino acid sensors CASTOR1 and SESN2, which sequester the GATOR2 complex in absence of amino acids. In the presence of abundant amino acids, GATOR2 is released from CASTOR1 and SESN2 and activated. Component of the Nup107-160 subcomplex of the nuclear pore complex (NPC). The Nup107-160 subcomplex is required for the assembly of a functional NPC. The Nup107-160 subcomplex is also required for normal kinetochore microtubule attachment, mitotic progression and chromosome segregation. This subunit plays a role in recruitment of the Nup107-160 subcomplex to the kinetochore. Its function is as follows. As a component of the GATOR2 complex, functions as an activator of the amino acid-sensing branch of the mTORC1 signaling pathway. The GATOR2 complex indirectly activates mTORC1 through the inhibition of the GATOR1 subcomplex. GATOR2 probably acts as an E3 ubiquitin-protein ligase toward GATOR1. In the presence of abundant amino acids, the GATOR2 complex mediates ubiquitination of the NPRL2 core component of the GATOR1 complex, leading to GATOR1 inactivation. In the absence of amino acids, GATOR2 is inhibited, activating the GATOR1 complex. Within the GATOR2 complex, SEC13 and SEH1L are required to stabilize the complex. The protein is Nucleoporin SEH1 (SEH1L) of Bos taurus (Bovine).